The chain runs to 438 residues: tRNA-2-methylthio-N(6)-dimethylallyladenosine synthase (438 aa).

The 121-residue stretch at 3 to 123 (KRLFVKTYGC…LPEMVAQAAR (121 aa)) folds into the MTTase N-terminal domain. Residues Cys12, Cys48, Cys86, Cys160, Cys164, and Cys167 each contribute to the [4Fe-4S] cluster site. Residues 146 to 374 (HAEGTSAFLS…QALLLDQTMR (229 aa)) form the Radical SAM core domain. The TRAM domain maps to 377-438 (HACVGREMRI…HPNSLEAVPA (62 aa)).

The protein belongs to the methylthiotransferase family. MiaB subfamily. In terms of assembly, monomer. [4Fe-4S] cluster is required as a cofactor.

Its subcellular location is the cytoplasm. It catalyses the reaction N(6)-dimethylallyladenosine(37) in tRNA + (sulfur carrier)-SH + AH2 + 2 S-adenosyl-L-methionine = 2-methylsulfanyl-N(6)-dimethylallyladenosine(37) in tRNA + (sulfur carrier)-H + 5'-deoxyadenosine + L-methionine + A + S-adenosyl-L-homocysteine + 2 H(+). In terms of biological role, catalyzes the methylthiolation of N6-(dimethylallyl)adenosine (i(6)A), leading to the formation of 2-methylthio-N6-(dimethylallyl)adenosine (ms(2)i(6)A) at position 37 in tRNAs that read codons beginning with uridine. This is tRNA-2-methylthio-N(6)-dimethylallyladenosine synthase from Paramagnetospirillum magneticum (strain ATCC 700264 / AMB-1) (Magnetospirillum magneticum).